The chain runs to 215 residues: Triosephosphate isomerase (215 aa).

H82 acts as the Electrophile in catalysis. E153 serves as the catalytic Proton acceptor.

The protein belongs to the triosephosphate isomerase family. As to quaternary structure, homodimer.

It carries out the reaction D-glyceraldehyde 3-phosphate = dihydroxyacetone phosphate. The protein operates within carbohydrate biosynthesis; gluconeogenesis. It functions in the pathway carbohydrate degradation; glycolysis; D-glyceraldehyde 3-phosphate from glycerone phosphate: step 1/1. The sequence is that of Triosephosphate isomerase (Tpi) from Heliothis virescens (Tobacco budworm moth).